We begin with the raw amino-acid sequence, 470 residues long: Uronate isomerase (470 aa).

This sequence belongs to the metallo-dependent hydrolases superfamily. Uronate isomerase family.

It carries out the reaction D-glucuronate = D-fructuronate. It catalyses the reaction aldehydo-D-galacturonate = keto-D-tagaturonate. It participates in carbohydrate metabolism; pentose and glucuronate interconversion. This is Uronate isomerase from Shigella boydii serotype 18 (strain CDC 3083-94 / BS512).